The chain runs to 125 residues: Small ribosomal subunit protein uS13 (125 aa).

Residues Pro-97–Ser-125 are disordered. Residues Gln-101 to Ser-125 show a composition bias toward basic residues.

Belongs to the universal ribosomal protein uS13 family. Part of the 30S ribosomal subunit. Forms a loose heterodimer with protein S19. Forms two bridges to the 50S subunit in the 70S ribosome.

In terms of biological role, located at the top of the head of the 30S subunit, it contacts several helices of the 16S rRNA. In the 70S ribosome it contacts the 23S rRNA (bridge B1a) and protein L5 of the 50S subunit (bridge B1b), connecting the 2 subunits; these bridges are implicated in subunit movement. Contacts the tRNAs in the A and P-sites. The polypeptide is Small ribosomal subunit protein uS13 (Thermotoga neapolitana (strain ATCC 49049 / DSM 4359 / NBRC 107923 / NS-E)).